Here is a 413-residue protein sequence, read N- to C-terminus: Lamin tail domain-containing protein 1 (413 aa).

Disordered stretches follow at residues 1-25 and 102-128; these read MMKE…VQDG and HKDS…SDVD. Over residues 107-128 the composition is skewed to polar residues; it reads LGKQSTSSMVPRRQPQSSSDVD. The 119-residue stretch at 169-287 folds into the LTD domain; that stretch reads EVGQFTSSSL…EAIAWYTPIH (119 aa). Residues 356-413 form a disordered region; it reads LPNKSPWCRNPNTSPHPYSSLIDSHDSDISESSLDTQLKPQPTKPKPDPGTKKKKAKS. The span at 385–396 shows a compositional bias: low complexity; sequence SESSLDTQLKPQ.

This sequence belongs to the intermediate filament family.

The protein is Lamin tail domain-containing protein 1 (Lmntd1) of Mus musculus (Mouse).